Consider the following 355-residue polypeptide: Guanine nucleotide-binding protein G(i) subunit alpha-2 (355 aa).

Glycine 2 carries the N-myristoyl glycine lipid modification. A lipid anchor (S-palmitoyl cysteine) is attached at cysteine 3. The 324-residue stretch at 32–355 (REVKLLLLGA…KNNLKDCGLF (324 aa)) folds into the G-alpha domain. The tract at residues 35–48 (KLLLLGAGESGKST) is G1 motif. Residues 40–47 (GAGESGKS), 176–182 (LRTRVKT), 201–205 (DVGGQ), 270–273 (NKKD), and alanine 327 each bind GTP. Mg(2+)-binding residues include serine 47 and threonine 182. Positions 174-182 (DVLRTRVKT) are G2 motif. The segment at 197-206 (FKMFDVGGQR) is G3 motif. The tract at residues 266-273 (ILFLNKKD) is G4 motif. The G5 motif stretch occupies residues 325-330 (TCATDT).

The protein belongs to the G-alpha family. G(i/o/t/z) subfamily. In terms of assembly, g proteins are composed of 3 units; alpha, beta and gamma. The alpha chain contains the guanine nucleotide binding site. In this context, interacts with GNB2. Interacts with UNC5B. Interacts with GPSM1. Interacts with RGS12 and RGS14. Interacts (inactive GDP-bound form) with NUCB1 (via GBA motif); the interaction leads to activation of GNAI3. Interacts (inactive GDP-bound form) with CCDC88C/DAPLE (via GBA motif). Interacts (inactive GDP-bound form) with CCDC8A/GIV (via GBA motif). Interacts with CXCR1 and CXCR2.

It localises to the cytoplasm. The protein localises to the cytoskeleton. It is found in the microtubule organizing center. Its subcellular location is the centrosome. The protein resides in the cell membrane. It localises to the membrane. Its function is as follows. Guanine nucleotide-binding proteins (G proteins) are involved as modulators or transducers in various transmembrane signaling systems. The G(i) proteins are involved in hormonal regulation of adenylate cyclase: they inhibit the cyclase in response to beta-adrenergic stimuli. May play a role in cell division. The protein is Guanine nucleotide-binding protein G(i) subunit alpha-2 (Gnai2) of Mus musculus (Mouse).